The primary structure comprises 345 residues: Ferrochelatase (345 aa).

Positions 199 and 302 each coordinate Fe cation.

Belongs to the ferrochelatase family.

It localises to the cytoplasm. The enzyme catalyses heme b + 2 H(+) = protoporphyrin IX + Fe(2+). The protein operates within porphyrin-containing compound metabolism; protoheme biosynthesis; protoheme from protoporphyrin-IX: step 1/1. Catalyzes the ferrous insertion into protoporphyrin IX. This Porphyromonas gingivalis (strain ATCC 33277 / DSM 20709 / CIP 103683 / JCM 12257 / NCTC 11834 / 2561) protein is Ferrochelatase.